The sequence spans 850 residues: Vacuolar membrane protease (850 aa).

At 1 to 20 the chain is on the cytoplasmic side; it reads MASSRAQWFNPIAFTPWPVT. Residues 21–41 form a helical membrane-spanning segment; it reads CITTIVYLALLIPILVINLVV. The Vacuolar segment spans residues 42-282; it reads PSAPETNPKG…DGKSKDQNKV (241 aa). Residues N53, N116, and N119 are each glycosylated (N-linked (GlcNAc...) asparagine). H175 and D187 together coordinate Zn(2+). E221 functions as the Proton acceptor in the catalytic mechanism. E222 is a binding site for Zn(2+). The chain crosses the membrane as a helical span at residues 283–303; sequence NSGTGTLGVWFDMFGTAFAVF. The Cytoplasmic portion of the chain corresponds to 304–308; that stretch reads RLHTL. A helical membrane pass occupies residues 309 to 329; sequence FAISVALLVIAPLVIFVTSVI. Topologically, residues 330-363 are vacuolar; it reads LSKTDRMYLFSMSKSLEGTGDQVSLRGLRGFSRT. A helical membrane pass occupies residues 364–384; the sequence is PIILVIATTIPICLAYLLEKV. The Cytoplasmic portion of the chain corresponds to 385-393; that stretch reads NPYIVHSSQ. A helical transmembrane segment spans residues 394 to 414; sequence FSVWSMMFSAWIFLAWFLACA. Residues 415–425 lie on the Vacuolar side of the membrane; sequence ADFFRPSALHR. Residues 426–446 form a helical membrane-spanning segment; that stretch reads AYSYTWIFIATWIMLVINTVY. Over 447–529 the chain is Cytoplasmic; sequence ANQKGIAAGP…TLPRWTWVLQ (83 aa). The chain crosses the membrane as a helical span at residues 530-550; that stretch reads LLLLAPIVLILVGQLALFLTA. The Vacuolar segment spans residues 551–563; the sequence is SMCQVGSDGVSTF. A helical transmembrane segment spans residues 564–584; sequence VVYLACSVFTTLLCIPLFPLI. The Cytoplasmic portion of the chain corresponds to 585-590; it reads HRFTYH. A helical transmembrane segment spans residues 591-611; that stretch reads IPTFLFLVFIGTLIYNLVAFP. The Vacuolar portion of the chain corresponds to 612 to 850; sequence FSPANRLKTF…VEASHSFTIQ (239 aa). N630, N658, and N702 each carry an N-linked (GlcNAc...) asparagine glycan.

It belongs to the peptidase M28 family. Zn(2+) serves as cofactor.

Its subcellular location is the vacuole membrane. Its function is as follows. May be involved in vacuolar sorting and osmoregulation. This is Vacuolar membrane protease from Ajellomyces capsulatus (strain NAm1 / WU24) (Darling's disease fungus).